A 120-amino-acid chain; its full sequence is uncharacterized protein (120 aa).

A PRD domain is found at 13–119 (VIDKDICKGM…YGLWMAANEE (107 aa)).

This is an uncharacterized protein from Escherichia coli (strain K12).